The following is a 65-amino-acid chain: Large ribosomal subunit protein bL32 (65 aa).

The segment covering 1-19 has biased composition (basic residues); the sequence is MAIVPKRKTSKQRKHKRQS. Residues 1-21 are disordered; the sequence is MAIVPKRKTSKQRKHKRQSHS.

This sequence belongs to the bacterial ribosomal protein bL32 family.

In Mesomycoplasma hyopneumoniae (strain 7448) (Mycoplasma hyopneumoniae), this protein is Large ribosomal subunit protein bL32.